A 418-amino-acid polypeptide reads, in one-letter code: MEEIGILVEKIQDEIPALSVSRPQTGLSFLGPEPEDLEDLYSRYKKLQQELEFLEVQEEYIKDEQKNLKKEFLHAQEEVKRIQSIPLVIGQFLEAVDQNTAIVGSTTGSNYYVRILSTIDRELLKPNASVALHKHSNALVDVLPPEADSSIMMLTSDQKPDVMYADIGGMDIQKQEVREAVELPLTHFELYKQIGIDPPRGVLMYGPPGCGKTMLAKAVAHHTTAAFIRVVGSEFVQKYLGEGPRMVRDVFRLAKENAPAIIFIDEIDAIATKRFDAQTGADREVQRILLELLNQMDGFDQNVNVKVIMATNRADTLDPALLRPGRLDRKIEFPLPDRRQKRLIFSTITSKMNLSEEVDLEDYVARPDKISGADINSICQESGMLAVRENRYIVLAKDFEKAYKTVIKKDEQEHEFYK.

M1 is modified (N-acetylmethionine). S21 carries the post-translational modification Phosphoserine. Residue T25 is modified to Phosphothreonine. S28 is subject to Phosphoserine. Residue 206–213 (GPPGCGKT) coordinates ATP. N6-acetyllysine is present on residues K397 and K401.

Belongs to the AAA ATPase family. Component of the 19S proteasome regulatory particle complex. The 26S proteasome consists of a 20S core particle (CP) and two 19S regulatory subunits (RP). The regulatory particle is made of a lid composed of 9 subunits, a base containing 6 ATPases including PSMC4 and few additional components. Interacts with NR1I3. Interacts with PAAF1. Interacts with TRIM5. Interacts with ZFAND1.

It localises to the cytoplasm. The protein localises to the nucleus. Functionally, component of the 26S proteasome, a multiprotein complex involved in the ATP-dependent degradation of ubiquitinated proteins. This complex plays a key role in the maintenance of protein homeostasis by removing misfolded or damaged proteins, which could impair cellular functions, and by removing proteins whose functions are no longer required. Therefore, the proteasome participates in numerous cellular processes, including cell cycle progression, apoptosis, or DNA damage repair. PSMC4 belongs to the heterohexameric ring of AAA (ATPases associated with diverse cellular activities) proteins that unfolds ubiquitinated target proteins that are concurrently translocated into a proteolytic chamber and degraded into peptides. The protein is 26S proteasome regulatory subunit 6B (Psmc4) of Mus musculus (Mouse).